Consider the following 440-residue polypeptide: Protein disulfide-isomerase A6 (440 aa).

Residues 1-19 (MARLVLGLVSCTFFLAVSG) form the signal peptide. 2 consecutive Thioredoxin domains span residues 20–133 (LYSS…ALRQ) and 151–287 (QGRG…EDIA). Cys-55 and Cys-58 are disulfide-bonded. A phosphoserine mark is found at Ser-129, Ser-156, and Ser-158. A disordered region spans residues 139-161 (LGGRSGGYSSGKQGRGDSSSKKD). The span at 152–161 (GRGDSSSKKD) shows a compositional bias: basic and acidic residues. Cys-190 and Cys-193 are joined by a disulfide. The segment at 399-440 (GGGSFPTITPREPWDGKDGELPVEDDIDLSDVELDDLEKDEL) is disordered. Residues 419 to 440 (LPVEDDIDLSDVELDDLEKDEL) show a composition bias toward acidic residues. Ser-428 is modified (phosphoserine). The Prevents secretion from ER motif lies at 437 to 440 (KDEL).

This sequence belongs to the protein disulfide isomerase family. In terms of assembly, part of a large chaperone multiprotein complex comprising DNAJB11, HSP90B1, HSPA5, HYOU, PDIA2, PDIA4, PDIA6, PPIB, SDF2L1, UGGT1 and very small amounts of ERP29, but not, or at very low levels, CALR nor CANX. Interacts with MICA on the surface of tumor cells, leading to MICA disulfide bond reduction which is required for its release from tumor cells. Interacts with ITGB3 following platelet stimulation. Interacts with ERN1; the interaction is direct. Interacts with EIF2AK3.

It is found in the endoplasmic reticulum lumen. The protein resides in the cell membrane. The protein localises to the melanosome. It carries out the reaction Catalyzes the rearrangement of -S-S- bonds in proteins.. Functionally, may function as a chaperone that inhibits aggregation of misfolded proteins. Negatively regulates the unfolded protein response (UPR) through binding to UPR sensors such as ERN1, which in turn inactivates ERN1 signaling. May also regulate the UPR via the EIF2AK3 UPR sensor. Plays a role in platelet aggregation and activation by agonists such as convulxin, collagen and thrombin. The protein is Protein disulfide-isomerase A6 (Pdia6) of Mus musculus (Mouse).